We begin with the raw amino-acid sequence, 176 residues long: MAFEELLEDPVIQKYLHELVGPKGMPVAAAPPDGEVTDEELAEELGLELNDVRRALFILYENDLATYRRLRDEDSGWLTYLWTFQYEKIPEQLQEEMHRLLDGLEERREYERENEFYLCEHCGIRFEFGEAMEFGFECPECGNQVETMENTRLVTAMENRLEELRDELNADVDVEA.

Residues 8–90 (EDPVIQKYLH…LWTFQYEKIP (83 aa)) enclose the HTH TFE/IIEalpha-type domain.

It belongs to the TFE family. Monomer. Interaction with RNA polymerase subunits RpoF and RpoE is necessary for Tfe stimulatory transcription activity. Able to interact with Tbp and RNA polymerase in the absence of DNA promoter. Interacts both with the preinitiation and elongation complexes.

In terms of biological role, transcription factor that plays a role in the activation of archaeal genes transcribed by RNA polymerase. Facilitates transcription initiation by enhancing TATA-box recognition by TATA-box-binding protein (Tbp), and transcription factor B (Tfb) and RNA polymerase recruitment. Not absolutely required for transcription in vitro, but particularly important in cases where Tbp or Tfb function is not optimal. It dynamically alters the nucleic acid-binding properties of RNA polymerases by stabilizing the initiation complex and destabilizing elongation complexes. Seems to translocate with the RNA polymerase following initiation and acts by binding to the non template strand of the transcription bubble in elongation complexes. This is Transcription factor E from Haloarcula marismortui (strain ATCC 43049 / DSM 3752 / JCM 8966 / VKM B-1809) (Halobacterium marismortui).